Reading from the N-terminus, the 311-residue chain is Methionyl-tRNA formyltransferase (311 aa).

110–113 contributes to the (6S)-5,6,7,8-tetrahydrofolate binding site; the sequence is SLLP.

The protein belongs to the Fmt family.

The enzyme catalyses L-methionyl-tRNA(fMet) + (6R)-10-formyltetrahydrofolate = N-formyl-L-methionyl-tRNA(fMet) + (6S)-5,6,7,8-tetrahydrofolate + H(+). Its function is as follows. Attaches a formyl group to the free amino group of methionyl-tRNA(fMet). The formyl group appears to play a dual role in the initiator identity of N-formylmethionyl-tRNA by promoting its recognition by IF2 and preventing the misappropriation of this tRNA by the elongation apparatus. This is Methionyl-tRNA formyltransferase from Streptococcus equi subsp. equi (strain 4047).